The sequence spans 1423 residues: DNA-directed RNA polymerase subunit beta' (1423 aa).

Positions 71, 73, 86, and 89 each coordinate Zn(2+). 3 residues coordinate Mg(2+): Asp461, Asp463, and Asp465. Zn(2+)-binding residues include Cys815, Cys889, Cys896, and Cys899.

It belongs to the RNA polymerase beta' chain family. In terms of assembly, the RNAP catalytic core consists of 2 alpha, 1 beta, 1 beta' and 1 omega subunit. When a sigma factor is associated with the core the holoenzyme is formed, which can initiate transcription. It depends on Mg(2+) as a cofactor. Requires Zn(2+) as cofactor.

It carries out the reaction RNA(n) + a ribonucleoside 5'-triphosphate = RNA(n+1) + diphosphate. DNA-dependent RNA polymerase catalyzes the transcription of DNA into RNA using the four ribonucleoside triphosphates as substrates. This is DNA-directed RNA polymerase subunit beta' from Actinobacillus pleuropneumoniae serotype 7 (strain AP76).